The following is a 147-amino-acid chain: Hemoglobin subunit epsilon (147 aa).

The 145-residue stretch at 3–147 folds into the Globin domain; that stretch reads HFTAEEKAAV…VAIALAHKYH (145 aa). S14 and S51 each carry phosphoserine. Heme b contacts are provided by H64 and H93.

This sequence belongs to the globin family. Heterotetramer of two alpha chains and two epsilon chains in early embryonic hemoglobin Gower-2; two zeta chains and two epsilon chains in early embryonic hemoglobin Gower-1. Red blood cells.

The epsilon chain is a beta-type chain of early mammalian embryonic hemoglobin. The chain is Hemoglobin subunit epsilon (HBE1) from Pan paniscus (Pygmy chimpanzee).